A 367-amino-acid polypeptide reads, in one-letter code: D-alanine--D-alanine ligase (367 aa).

The ATP-grasp domain maps to lysine 150 to glutamate 357. Arginine 178–glutamate 233 provides a ligand contact to ATP. Mg(2+)-binding residues include aspartate 312, glutamate 324, and asparagine 326.

The protein belongs to the D-alanine--D-alanine ligase family. Mg(2+) serves as cofactor. Mn(2+) is required as a cofactor.

The protein resides in the cytoplasm. It carries out the reaction 2 D-alanine + ATP = D-alanyl-D-alanine + ADP + phosphate + H(+). It participates in cell wall biogenesis; peptidoglycan biosynthesis. In terms of biological role, cell wall formation. The chain is D-alanine--D-alanine ligase from Mycolicibacterium vanbaalenii (strain DSM 7251 / JCM 13017 / BCRC 16820 / KCTC 9966 / NRRL B-24157 / PYR-1) (Mycobacterium vanbaalenii).